We begin with the raw amino-acid sequence, 277 residues long: 4-hydroxy-tetrahydrodipicolinate reductase (277 aa).

NAD(+) is bound by residues 11-16 (GALGRM) and 110-112 (GTT). Residue His-166 is the Proton donor/acceptor of the active site. His-167 contacts (S)-2,3,4,5-tetrahydrodipicolinate. The active-site Proton donor is Lys-170. 176 to 177 (GT) lines the (S)-2,3,4,5-tetrahydrodipicolinate pocket.

Belongs to the DapB family.

Its subcellular location is the cytoplasm. The enzyme catalyses (S)-2,3,4,5-tetrahydrodipicolinate + NAD(+) + H2O = (2S,4S)-4-hydroxy-2,3,4,5-tetrahydrodipicolinate + NADH + H(+). The catalysed reaction is (S)-2,3,4,5-tetrahydrodipicolinate + NADP(+) + H2O = (2S,4S)-4-hydroxy-2,3,4,5-tetrahydrodipicolinate + NADPH + H(+). It functions in the pathway amino-acid biosynthesis; L-lysine biosynthesis via DAP pathway; (S)-tetrahydrodipicolinate from L-aspartate: step 4/4. In terms of biological role, catalyzes the conversion of 4-hydroxy-tetrahydrodipicolinate (HTPA) to tetrahydrodipicolinate. The polypeptide is 4-hydroxy-tetrahydrodipicolinate reductase (Synechococcus sp. (strain CC9902)).